Here is a 198-residue protein sequence, read N- to C-terminus: MDIILLERIPRLGQMGDIVSVKDGYARNFLLPQGKALRANEANKKHFETQRAQLEARNLERKSEAQKIAEKLDGQSFIAVRSAGETGQLYGSVSTRDIAEIITDEGFSIGRNQIELNHPIKMIGLHTITLSLHPEVQISVVINVARSTSEAQRQAEGETLTSAEEIYNLQEEILEENQEELLVEEINDNDINSPHQEA.

The protein belongs to the bacterial ribosomal protein bL9 family.

Functionally, binds to the 23S rRNA. The protein is Large ribosomal subunit protein bL9 of Bartonella tribocorum (strain CIP 105476 / IBS 506).